Consider the following 452-residue polypeptide: GTPase Der (452 aa).

EngA-type G domains lie at 4 to 169 (PIVA…PSPD) and 177 to 352 (INVS…EEHR). GTP is bound by residues 10–17 (GRPNVGKS), 57–61 (DTGGL), 120–123 (NKCE), 183–190 (GRPNVGKS), 230–234 (DTAGI), and 295–298 (NKWD). Residues 353 to 438 (RRVNTSVVNE…PIRLLWRGKK (86 aa)) form the KH-like domain.

Belongs to the TRAFAC class TrmE-Era-EngA-EngB-Septin-like GTPase superfamily. EngA (Der) GTPase family. As to quaternary structure, associates with the 50S ribosomal subunit.

In terms of biological role, GTPase that plays an essential role in the late steps of ribosome biogenesis. The chain is GTPase Der from Crocosphaera subtropica (strain ATCC 51142 / BH68) (Cyanothece sp. (strain ATCC 51142)).